A 199-amino-acid chain; its full sequence is Recombination protein RecR (199 aa).

Residues 56 to 71 form a C4-type zinc finger; that stretch reads CSICFNWSAEDPCEIC. Residues 79 to 174 enclose the Toprim domain; that stretch reads STWCVVADVK…GLRMTRLAFG (96 aa).

Belongs to the RecR family.

May play a role in DNA repair. It seems to be involved in an RecBC-independent recombinational process of DNA repair. It may act with RecF and RecO. The polypeptide is Recombination protein RecR (Synechococcus sp. (strain JA-3-3Ab) (Cyanobacteria bacterium Yellowstone A-Prime)).